A 463-amino-acid chain; its full sequence is Argininosuccinate lyase (463 aa).

The protein belongs to the lyase 1 family. Argininosuccinate lyase subfamily.

Its subcellular location is the cytoplasm. It catalyses the reaction 2-(N(omega)-L-arginino)succinate = fumarate + L-arginine. Its pathway is amino-acid biosynthesis; L-arginine biosynthesis; L-arginine from L-ornithine and carbamoyl phosphate: step 3/3. This Streptococcus pneumoniae serotype 2 (strain D39 / NCTC 7466) protein is Argininosuccinate lyase.